The sequence spans 250 residues: Probable transcriptional regulatory protein MAP_1030 (250 aa).

The protein belongs to the TACO1 family.

The protein resides in the cytoplasm. This Mycolicibacterium paratuberculosis (strain ATCC BAA-968 / K-10) (Mycobacterium paratuberculosis) protein is Probable transcriptional regulatory protein MAP_1030.